Consider the following 281-residue polypeptide: Large ribosomal subunit protein uL2 (281 aa).

The segment at 222-281 (TVRGSVMNPNDHPHGGGEGRTPIGRKSPVTPWGKKALGVKTRNTKKPSEKLIVRKRNAKK) is disordered.

Belongs to the universal ribosomal protein uL2 family. As to quaternary structure, part of the 50S ribosomal subunit. Forms a bridge to the 30S subunit in the 70S ribosome.

Its function is as follows. One of the primary rRNA binding proteins. Required for association of the 30S and 50S subunits to form the 70S ribosome, for tRNA binding and peptide bond formation. It has been suggested to have peptidyltransferase activity; this is somewhat controversial. Makes several contacts with the 16S rRNA in the 70S ribosome. The sequence is that of Large ribosomal subunit protein uL2 from Mesoplasma florum (strain ATCC 33453 / NBRC 100688 / NCTC 11704 / L1) (Acholeplasma florum).